A 261-amino-acid chain; its full sequence is 14-3-3 protein 8 (261 aa).

The tract at residues 237–261 is disordered; sequence DIPEDGEEAPKGDAANKVGAGEDAE.

The protein belongs to the 14-3-3 family. Homodimer.

This chain is 14-3-3 protein 8 (TFT8), found in Solanum lycopersicum (Tomato).